Consider the following 302-residue polypeptide: Homoserine O-acetyltransferase (302 aa).

Cysteine 142 functions as the Acyl-thioester intermediate in the catalytic mechanism. Substrate is bound by residues lysine 163 and serine 192. The active-site Proton acceptor is the histidine 235. Glutamate 237 is a catalytic residue. Position 249 (arginine 249) interacts with substrate.

The protein belongs to the MetA family.

The protein resides in the cytoplasm. It catalyses the reaction L-homoserine + acetyl-CoA = O-acetyl-L-homoserine + CoA. The protein operates within amino-acid biosynthesis; L-methionine biosynthesis via de novo pathway; O-acetyl-L-homoserine from L-homoserine: step 1/1. In terms of biological role, transfers an acetyl group from acetyl-CoA to L-homoserine, forming acetyl-L-homoserine. The chain is Homoserine O-acetyltransferase from Bacillus pumilus (strain SAFR-032).